Here is a 251-residue protein sequence, read N- to C-terminus: NADPH-dependent oxidoreductase (251 aa).

This sequence belongs to the flavin oxidoreductase frp family. FMN is required as a cofactor.

In terms of biological role, reduces FMN, organic nitro compounds and disulfide DTNB. Involved in maintenance of the cellular redox state and the disulfide stress response. This is NADPH-dependent oxidoreductase (nfrA) from Staphylococcus epidermidis (strain ATCC 35984 / DSM 28319 / BCRC 17069 / CCUG 31568 / BM 3577 / RP62A).